We begin with the raw amino-acid sequence, 429 residues long: 3-phosphoshikimate 1-carboxyvinyltransferase (429 aa).

Residues Lys-11, Ser-12, and Arg-16 each coordinate 3-phosphoshikimate. Lys-11 contacts phosphoenolpyruvate. Positions 82 and 110 each coordinate phosphoenolpyruvate. Residues Ser-155, Gln-157, Asp-302, and Lys-329 each coordinate 3-phosphoshikimate. Residue Gln-157 coordinates phosphoenolpyruvate. Catalysis depends on Asp-302, which acts as the Proton acceptor. Positions 333 and 385 each coordinate phosphoenolpyruvate.

Belongs to the EPSP synthase family. Monomer.

Its subcellular location is the cytoplasm. The enzyme catalyses 3-phosphoshikimate + phosphoenolpyruvate = 5-O-(1-carboxyvinyl)-3-phosphoshikimate + phosphate. It participates in metabolic intermediate biosynthesis; chorismate biosynthesis; chorismate from D-erythrose 4-phosphate and phosphoenolpyruvate: step 6/7. Catalyzes the transfer of the enolpyruvyl moiety of phosphoenolpyruvate (PEP) to the 5-hydroxyl of shikimate-3-phosphate (S3P) to produce enolpyruvyl shikimate-3-phosphate and inorganic phosphate. This chain is 3-phosphoshikimate 1-carboxyvinyltransferase, found in Helicobacter pylori (strain Shi470).